Here is a 427-residue protein sequence, read N- to C-terminus: Mitogen-activated protein kinase 8B (427 aa).

The region spanning 26–321 (YQNLRPIGSG…VDEALQHPYI (296 aa)) is the Protein kinase domain. Residues 33 to 40 (GSGAQGIV) and lysine 55 each bind ATP. Residue aspartate 151 is the Proton acceptor of the active site. A Phosphothreonine modification is found at threonine 183. Residues 183 to 185 (TPY) carry the TXY motif. Tyrosine 185 bears the Phosphotyrosine mark. The disordered stretch occupies residues 372–427 (IRGQPSPIGAAVINGSPQPSSSSSINDVSSMSTEPTVASDTDSSLEASAGPLSCCR). The segment covering 387 to 403 (SPQPSSSSSINDVSSMS) has biased composition (low complexity). Positions 404-417 (TEPTVASDTDSSLE) are enriched in polar residues.

This sequence belongs to the protein kinase superfamily. CMGC Ser/Thr protein kinase family. MAP kinase subfamily. It depends on Mg(2+) as a cofactor. Post-translationally, dually phosphorylated on Thr-183 and Tyr-185, which activates the enzyme. Expressed at high levels in the ovary and at lower levels in brain, gill, heart, spleen, liver, kidney, muscle, bladder and gut.

It carries out the reaction L-seryl-[protein] + ATP = O-phospho-L-seryl-[protein] + ADP + H(+). The catalysed reaction is L-threonyl-[protein] + ATP = O-phospho-L-threonyl-[protein] + ADP + H(+). Its activity is regulated as follows. Activated by threonine and tyrosine phosphorylation. In terms of biological role, responds to activation by environmental stress and pro-inflammatory cytokines by phosphorylating a number of transcription factors, primarily components of AP-1 such as c-Jun and ATF2 and thus regulates AP-1 transcriptional activity. May play a role in the regulation of the circadian clock. The sequence is that of Mitogen-activated protein kinase 8B (mapk8b) from Cyprinus carpio (Common carp).